The chain runs to 77 residues: uncharacterized protein (77 aa).

The disordered stretch occupies residues 56–77; sequence SVIPKQQPPSSAAAISESEFED. A compositionally biased stretch (low complexity) spans 65–77; sequence SSAAAISESEFED.

This is an uncharacterized protein from Frog virus 3 (isolate Goorha) (FV-3).